A 594-amino-acid polypeptide reads, in one-letter code: Zinc finger protein 467 (594 aa).

Positions 1–86 (MRETLEALNS…PQKAEPAGSV (86 aa)) are disordered. The segment at 1–183 (MRETLEALNS…TLRLHQRLHR (183 aa)) is interaction with STAT3. Positions 31–47 (SNAQEKMSSRGESTLHS) are enriched in polar residues. A compositionally biased stretch (basic and acidic residues) spans 54–64 (PGQKEGIHTEQ). Lysine 97 is covalently cross-linked (Glycyl lysine isopeptide (Lys-Gly) (interchain with G-Cter in SUMO2)). C2H2-type zinc fingers lie at residues 160–182 (YGCEECERRFRDQLTLRLHQRLH), 188–210 (CACPDCGRSFTQRAHMLLHQRSH), 216–238 (FPCSECDKRFSKKAHLTRHLRTH), 244–266 (YPCAECGKRFSQKIHLGSHQKTH), 272–294 (FPCTECEKRFRKKTHLIRHQRIH), 300–322 (YQCTQCTRSFTHKQHLVRHQRVH), 355–377 (FACSHCGQSFGWKKNLATHQSLH), 430–452 (FFCPDCGRGFAHGQHLARHRRVH), 458–480 (FACAQCGRRFGSRPNLVAHSRAH), 486–508 (FACAQCGRRFSRKSHLGRHQAVH), 514–536 (HACAVCARCFSSKTNLVRHQAIH), and 542–564 (FSCPQCAKSFSRKTHLVRHQRIH). Residues 313–351 (QHLVRHQRVHDAASRTRSSPDIPVAPHSPTASLTPSPPG) are disordered. Lysine 368 participates in a covalent cross-link: Glycyl lysine isopeptide (Lys-Gly) (interchain with G-Cter in SUMO2).

Belongs to the krueppel C2H2-type zinc-finger protein family. Interacts with STAT3. Enhances STAT3 activity by keeping it in the nucleus.

The protein resides in the nucleus. Functionally, transcription factor that promotes adipocyte differentiation and suppresses osteoblast differentiation in the bone marrow. Enhances the osteoclast-supporting ability of stromal cells. Binds with STAT3 the consensus sequence 5'-CTTCTGGGAAGA-3' of the acute phase response element (APRE). Transactivates several promoters including FOS, OSM and PPARG. Recruits a histone deacetylase complex. This chain is Zinc finger protein 467 (Znf467), found in Mus musculus (Mouse).